The following is a 300-amino-acid chain: Cation-efflux pump FieF (300 aa).

Residues 24–44 (LLIKIFAWWYTGSVSILAALV) form a helical membrane-spanning segment. Residues Asp45 and Asp49 each coordinate Zn(2+). Helical transmembrane passes span 82–102 (AALA…LTSI) and 114–134 (PGVG…LVTF). His153 and Asp157 together coordinate Zn(2+). The next 2 helical transmembrane spans lie at 156–176 (SDVM…YGWH) and 178–198 (ADAL…LRMG).

Belongs to the cation diffusion facilitator (CDF) transporter (TC 2.A.4) family. FieF subfamily. In terms of assembly, homodimer.

It is found in the cell inner membrane. The enzyme catalyses Zn(2+)(in) + H(+)(out) = Zn(2+)(out) + H(+)(in). It carries out the reaction Cd(2+)(in) + H(+)(out) = Cd(2+)(out) + H(+)(in). It catalyses the reaction Fe(2+)(in) + H(+)(out) = Fe(2+)(out) + H(+)(in). In terms of biological role, divalent metal cation transporter which exports Zn(2+), Cd(2+) and possibly Fe(2+). May be involved in zinc and iron detoxification by efflux. The protein is Cation-efflux pump FieF of Salmonella schwarzengrund (strain CVM19633).